The chain runs to 118 residues: Cysteine-rich and transmembrane domain-containing protein 1 (118 aa).

Composition is skewed to low complexity over residues 1 to 54 and 64 to 74; these read MNYE…QGYP and YTAQPGYQGYP. The tract at residues 1-82 is disordered; the sequence is MNYEQPPAYT…YPQPGPPTNT (82 aa). Residues 95-112 form a helical membrane-spanning segment; it reads SGEQACLATCWAALCCCC.

Belongs to the CYSTM1 family.

It localises to the membrane. The chain is Cysteine-rich and transmembrane domain-containing protein 1 (cystm1) from Danio rerio (Zebrafish).